We begin with the raw amino-acid sequence, 158 residues long: NAD(P)H-quinone oxidoreductase subunit J, chloroplastic (158 aa).

The protein belongs to the complex I 30 kDa subunit family. NDH is composed of at least 16 different subunits, 5 of which are encoded in the nucleus.

It localises to the plastid. The protein resides in the chloroplast thylakoid membrane. The catalysed reaction is a plastoquinone + NADH + (n+1) H(+)(in) = a plastoquinol + NAD(+) + n H(+)(out). It catalyses the reaction a plastoquinone + NADPH + (n+1) H(+)(in) = a plastoquinol + NADP(+) + n H(+)(out). Functionally, NDH shuttles electrons from NAD(P)H:plastoquinone, via FMN and iron-sulfur (Fe-S) centers, to quinones in the photosynthetic chain and possibly in a chloroplast respiratory chain. The immediate electron acceptor for the enzyme in this species is believed to be plastoquinone. Couples the redox reaction to proton translocation, and thus conserves the redox energy in a proton gradient. The chain is NAD(P)H-quinone oxidoreductase subunit J, chloroplastic from Trachelium caeruleum (Blue throatwort).